A 447-amino-acid polypeptide reads, in one-letter code: GTPase Der (447 aa).

EngA-type G domains follow at residues 3–167 and 181–354; these read PVIA…FAER and TRIA…AAAM. Residues 9–16, 56–60, 119–122, 187–194, 234–238, and 299–302 each bind GTP; these read GRPNVGKS, DTGGF, NKAE, DTAGL, and NKWD. In terms of domain architecture, KH-like spans 355–439; that stretch reads VKLPTPKLTR…PLRIEFRTNK (85 aa).

This sequence belongs to the TRAFAC class TrmE-Era-EngA-EngB-Septin-like GTPase superfamily. EngA (Der) GTPase family. Associates with the 50S ribosomal subunit.

Its function is as follows. GTPase that plays an essential role in the late steps of ribosome biogenesis. The chain is GTPase Der from Ralstonia pickettii (strain 12J).